The primary structure comprises 447 residues: Na(+)/H(+) antiporter NhaA 2 (447 aa).

A run of 10 helical transmembrane segments spans residues 34–54 (VGGV…NSPW), 77–97 (LTLG…VVGL), 115–135 (ALPI…FVLV), 146–166 (GWAI…AVIG), 176–196 (FLLT…AVFY), 200–220 (INGL…LCVQ), 290–310 (VSAG…SIGG), 321–341 (PITL…IVLT), 359–379 (WVDV…SLLI), and 393–413 (FVKI…AVVL).

It belongs to the NhaA Na(+)/H(+) (TC 2.A.33) antiporter family.

The protein resides in the cell membrane. The enzyme catalyses Na(+)(in) + 2 H(+)(out) = Na(+)(out) + 2 H(+)(in). Its function is as follows. Na(+)/H(+) antiporter that extrudes sodium in exchange for external protons. The protein is Na(+)/H(+) antiporter NhaA 2 of Mycolicibacterium gilvum (strain PYR-GCK) (Mycobacterium gilvum (strain PYR-GCK)).